Consider the following 286-residue polypeptide: 3-hydroxyanthranilate 3,4-dioxygenase (286 aa).

Positions 1–160 (MERRVRVKSW…SEQYRTGKPN (160 aa)) are domain A (catalytic). Arginine 43 contacts O2. Residues histidine 47, glutamate 53, and histidine 91 each contribute to the Fe cation site. Glutamate 53 contributes to the substrate binding site. Positions 95 and 105 each coordinate substrate. The tract at residues 161-177 (PDQLLKELPFPLNTRSI) is linker. The interval 178-286 (MKPMSLKAWL…QDPARKKPWW (109 aa)) is domain B.

It belongs to the 3-HAO family. As to quaternary structure, monomer. Requires Fe(2+) as cofactor.

It is found in the cytoplasm. Its subcellular location is the cytosol. It carries out the reaction 3-hydroxyanthranilate + O2 = (2Z,4Z)-2-amino-3-carboxymuconate 6-semialdehyde. Its pathway is cofactor biosynthesis; NAD(+) biosynthesis; quinolinate from L-kynurenine: step 3/3. Functionally, catalyzes the oxidative ring opening of 3-hydroxyanthranilate to 2-amino-3-carboxymuconate semialdehyde, which spontaneously cyclizes to quinolinate. In Mus musculus (Mouse), this protein is 3-hydroxyanthranilate 3,4-dioxygenase (Haao).